The following is a 321-amino-acid chain: Glutaminase (321 aa).

The substrate site is built by S69, N120, E165, N172, Y196, Y248, and V266.

Belongs to the glutaminase family. As to quaternary structure, homotetramer.

The catalysed reaction is L-glutamine + H2O = L-glutamate + NH4(+). The sequence is that of Glutaminase from Bacteroides fragilis (strain ATCC 25285 / DSM 2151 / CCUG 4856 / JCM 11019 / LMG 10263 / NCTC 9343 / Onslow / VPI 2553 / EN-2).